We begin with the raw amino-acid sequence, 381 residues long: Cobalt-precorrin-5B C(1)-methyltransferase (381 aa).

It belongs to the CbiD family.

It carries out the reaction Co-precorrin-5B + S-adenosyl-L-methionine = Co-precorrin-6A + S-adenosyl-L-homocysteine. It participates in cofactor biosynthesis; adenosylcobalamin biosynthesis; cob(II)yrinate a,c-diamide from sirohydrochlorin (anaerobic route): step 6/10. In terms of biological role, catalyzes the methylation of C-1 in cobalt-precorrin-5B to form cobalt-precorrin-6A. This Prochlorococcus marinus (strain NATL2A) protein is Cobalt-precorrin-5B C(1)-methyltransferase.